Reading from the N-terminus, the 413-residue chain is O-methyltransferase kntB (413 aa).

Residues 255 to 256 (GG), aspartate 280, 302 to 303 (NF), and arginine 319 each bind S-adenosyl-L-methionine. The active-site Proton acceptor is histidine 322.

It belongs to the class I-like SAM-binding methyltransferase superfamily. Cation-independent O-methyltransferase family. It depends on S-adenosyl-L-methionine as a cofactor.

The protein operates within secondary metabolite biosynthesis. Functionally, non-reducing polyketide synthase; part of the gene cluster that mediates the biosynthesis of the bicoumarin kotanin. The non-reducing polyketide synthase ktnS first catalyzes the formation of the pentaketidic 4,7-dihydroxy-5-methylcoumarin from acetyl coenzyme A and 4 malonyl coenzyme A molecules. Further O-methylation by ktnB leads to the formation of 7-demethylsiderin. Then, an oxidative phenol coupling catalyzed by the cytochrome P450 monooxygenase ktnC forms the 8,8'-dimer P-orlandin via dimerization the monomeric precursor, 7-demethylsiderin. P-orlandin is subsequently O-methylated in a stepwise fashion to demethylkotanin and kotanin. This is O-methyltransferase kntB from Aspergillus niger (strain ATCC MYA-4892 / CBS 513.88 / FGSC A1513).